A 317-amino-acid polypeptide reads, in one-letter code: MLSLDYNNIFIYELLTERFSSENPSSIDQVVTDFDGVTFHISTPEEKTKILISLSMKCYPELVNYGTLDLLKQIYGAYVHEPEMGYNFSILIDLQQLPATDEEKEQLAMSISMLKRNVLAAPFHRAFTKQAELADLARKDPENAPMLDKQATSQELMAIHYRDEETIVLWPEHDRVTVVFSTKFREETDRIFGKVFLQEFVDARRRPAIQTAPQVLFSYRDPPLEIRDIQGIQKGDDFGFVTFVLFERHFTPQNREDCISHIQVFRNTLHFHIKASKAYMHQRMRKRVADFQKVLNRAKPDVELERKTATGRSFVRA.

It belongs to the ARPC2 family. In terms of assembly, component of the Arp2/3 complex composed of arp2, act2, arc1/p41-ARC, arc2/p34-ARC, arc3/p21-ARC, arc4/p20-ARC and arc5/p16-ARC.

The protein localises to the cytoplasm. Its subcellular location is the cytoskeleton. It localises to the actin patch. In terms of biological role, functions as actin-binding component of the Arp2/3 complex which is involved in regulation of actin polymerization and together with an activating nucleation-promoting factor (NPF) mediates the formation of branched actin networks. Seems to contact the mother actin filament. The protein is Actin-related protein 2/3 complex subunit 2 (arc2) of Schizosaccharomyces pombe (strain 972 / ATCC 24843) (Fission yeast).